A 289-amino-acid polypeptide reads, in one-letter code: D-alanine aminotransferase (289 aa).

Substrate is bound at residue tyrosine 31. Arginine 50 is a binding site for pyridoxal 5'-phosphate. Substrate contacts are provided by arginine 99 and histidine 101. Lysine 147 serves as the catalytic Proton acceptor. Lysine 147 carries the N6-(pyridoxal phosphate)lysine modification. Residue glutamate 179 participates in pyridoxal 5'-phosphate binding.

This sequence belongs to the class-IV pyridoxal-phosphate-dependent aminotransferase family. In terms of assembly, homodimer. It depends on pyridoxal 5'-phosphate as a cofactor.

The catalysed reaction is D-alanine + 2-oxoglutarate = D-glutamate + pyruvate. Acts on the D-isomers of alanine, leucine, aspartate, glutamate, aminobutyrate, norvaline and asparagine. The enzyme transfers an amino group from a substrate D-amino acid to the pyridoxal phosphate cofactor to form pyridoxamine and an alpha-keto acid in the first half-reaction. The second half-reaction is the reverse of the first, transferring the amino group from the pyridoxamine to a second alpha-keto acid to form the product D-amino acid via a ping-pong mechanism. This is an important process in the formation of D-alanine and D-glutamate, which are essential bacterial cell wall components. This is D-alanine aminotransferase (dat) from Listeria monocytogenes serotype 4b (strain F2365).